We begin with the raw amino-acid sequence, 876 residues long: Leucine--tRNA ligase (876 aa).

The 'HIGH' region motif lies at 43–53 (PYPSGRIHMGH). Positions 632-636 (KMSKS) match the 'KMSKS' region motif. Lys635 contacts ATP.

It belongs to the class-I aminoacyl-tRNA synthetase family.

It is found in the cytoplasm. It carries out the reaction tRNA(Leu) + L-leucine + ATP = L-leucyl-tRNA(Leu) + AMP + diphosphate. This chain is Leucine--tRNA ligase, found in Rhizobium etli (strain ATCC 51251 / DSM 11541 / JCM 21823 / NBRC 15573 / CFN 42).